Consider the following 231-residue polypeptide: Demethylmenaquinone methyltransferase (231 aa).

S-adenosyl-L-methionine contacts are provided by residues T62, D80, 100 to 101 (DA), and S117.

It belongs to the class I-like SAM-binding methyltransferase superfamily. MenG/UbiE family.

The enzyme catalyses a 2-demethylmenaquinol + S-adenosyl-L-methionine = a menaquinol + S-adenosyl-L-homocysteine + H(+). The protein operates within quinol/quinone metabolism; menaquinone biosynthesis; menaquinol from 1,4-dihydroxy-2-naphthoate: step 2/2. Functionally, methyltransferase required for the conversion of demethylmenaquinol (DMKH2) to menaquinol (MKH2). The protein is Demethylmenaquinone methyltransferase of Mycobacterium marinum (strain ATCC BAA-535 / M).